Consider the following 151-residue polypeptide: Ubiquitin-conjugating enzyme E2 W (151 aa).

A Peptide (Met-Gly) (interchain with G-Cter in ubiquitin) cross-link involves residue methionine 1. The region spanning 3–151 (SMQKRLQKEL…TKWWYHDDTC (149 aa)) is the UBC core domain. Residue cysteine 91 is the Glycyl thioester intermediate of the active site.

Belongs to the ubiquitin-conjugating enzyme family. Homodimer. Interacts with FANCL. Interacts with STUB1/CHIP. Post-translationally, autoubiquitinated at Met-1.

It localises to the nucleus. It catalyses the reaction S-ubiquitinyl-[E1 ubiquitin-activating enzyme]-L-cysteine + [E2 ubiquitin-conjugating enzyme]-L-cysteine = [E1 ubiquitin-activating enzyme]-L-cysteine + S-ubiquitinyl-[E2 ubiquitin-conjugating enzyme]-L-cysteine.. The enzyme catalyses S-ubiquitinyl-[E1 ubiquitin-activating enzyme]-L-cysteine + [acceptor protein]-N-terminal-amino acid = [E1 ubiquitin-activating enzyme]-L-cysteine + N-terminal-ubiquitinyl-[acceptor protein].. The protein operates within protein modification; protein ubiquitination. Its function is as follows. Accepts ubiquitin from the E1 complex and catalyzes its covalent attachment to other proteins. Specifically monoubiquitinates the N-terminus of various substrates, including ATXN3, MAPT/TAU, POLR2H/RPB8 and STUB1/CHIP, by recognizing backbone atoms of disordered N-termini. Involved in degradation of misfolded chaperone substrates by mediating monoubiquitination of STUB1/CHIP, leading to recruitment of ATXN3 to monoubiquitinated STUB1/CHIP, and restriction of the length of ubiquitin chain attached to STUB1/CHIP substrates by ATXN3. After UV irradiation, but not after mitomycin-C (MMC) treatment, acts as a specific E2 ubiquitin-conjugating enzyme for the Fanconi anemia complex by associating with E3 ubiquitin-protein ligase FANCL and catalyzing monoubiquitination of FANCD2, a key step in the DNA damage pathway. In vitro catalyzes 'Lys-11'-linked polyubiquitination. UBE2W-catalyzed ubiquitination also occurs in the presence of inactive RING/U-box type E3s, i.e. lacking the active site cysteine residues to form thioester bonds with ubiquitin, or even in the absence of E3, albeit at a slower rate. The chain is Ubiquitin-conjugating enzyme E2 W (Ube2w) from Mus musculus (Mouse).